The chain runs to 475 residues: Trifunctional enzyme subunit beta, mitochondrial (475 aa).

The transit peptide at 1–34 (MISLLTYTLKNLPNTSKWALRFCMRPLSSSSQLQ) directs the protein to the mitochondrion. Lysine 73 is subject to N6-acetyllysine; alternate. Lysine 73 is subject to N6-succinyllysine; alternate. The active-site Acyl-thioester intermediate is the cysteine 139. An intramembrane segment occupies 174–221 (IRHSRKMRKMMLDLNKAKTLAQRLSIISKFRLNFLSPELPAVSEFSTS). The residue at position 189 (lysine 189) is an N6-acetyllysine; alternate. Lysine 189 carries the N6-succinyllysine; alternate modification. 2 positions are modified to N6-succinyllysine: lysine 191 and lysine 292. N6-acetyllysine; alternate is present on lysine 294. Lysine 294 carries the post-translational modification N6-succinyllysine; alternate. The residue at position 299 (lysine 299) is an N6-acetyllysine. Lysine 333 is modified (N6-acetyllysine; alternate). Lysine 333 carries the N6-succinyllysine; alternate modification. 2 positions are modified to N6-acetyllysine: lysine 349 and lysine 362. Residue cysteine 459 is the Proton donor/acceptor of the active site.

The protein belongs to the thiolase-like superfamily. Thiolase family. In terms of assembly, heterotetramer of 2 alpha/HADHA and 2 beta/HADHB subunits; forms the mitochondrial trifunctional enzyme. Also purified as higher order heterooligomers including a 4 alpha/HADHA and 4 beta/HADHB heterooligomer which physiological significance remains unclear. The mitochondrial trifunctional enzyme interacts with MTLN. Interacts with RSAD2/viperin.

The protein localises to the mitochondrion. It is found in the mitochondrion inner membrane. It localises to the mitochondrion outer membrane. Its subcellular location is the endoplasmic reticulum. It catalyses the reaction an acyl-CoA + acetyl-CoA = a 3-oxoacyl-CoA + CoA. It carries out the reaction butanoyl-CoA + acetyl-CoA = 3-oxohexanoyl-CoA + CoA. The enzyme catalyses hexanoyl-CoA + acetyl-CoA = 3-oxooctanoyl-CoA + CoA. The catalysed reaction is octanoyl-CoA + acetyl-CoA = 3-oxodecanoyl-CoA + CoA. It catalyses the reaction decanoyl-CoA + acetyl-CoA = 3-oxododecanoyl-CoA + CoA. It carries out the reaction dodecanoyl-CoA + acetyl-CoA = 3-oxotetradecanoyl-CoA + CoA. The enzyme catalyses tetradecanoyl-CoA + acetyl-CoA = 3-oxohexadecanoyl-CoA + CoA. It participates in lipid metabolism; fatty acid beta-oxidation. Mitochondrial trifunctional enzyme catalyzes the last three of the four reactions of the mitochondrial beta-oxidation pathway. The mitochondrial beta-oxidation pathway is the major energy-producing process in tissues and is performed through four consecutive reactions breaking down fatty acids into acetyl-CoA. Among the enzymes involved in this pathway, the trifunctional enzyme exhibits specificity for long-chain fatty acids. Mitochondrial trifunctional enzyme is a heterotetrameric complex composed of two proteins, the trifunctional enzyme subunit alpha/HADHA carries the 2,3-enoyl-CoA hydratase and the 3-hydroxyacyl-CoA dehydrogenase activities, while the trifunctional enzyme subunit beta/HADHB described here bears the 3-ketoacyl-CoA thiolase activity. The sequence is that of Trifunctional enzyme subunit beta, mitochondrial (HADHB) from Bos taurus (Bovine).